Here is a 104-residue protein sequence, read N- to C-terminus: uncharacterized protein (104 aa).

Residues 24 to 69 (VIKQIIEKYNDKVKELDTLKNQYQNLQQDYENLKQQVSLQRQTMIS) are a coiled coil.

This is an uncharacterized protein from Acanthamoeba polyphaga mimivirus (APMV).